A 123-amino-acid chain; its full sequence is Small ribosomal subunit protein uS12 (123 aa).

D89 is modified (3-methylthioaspartic acid). Residues 101-123 are disordered; sequence TLDTSGVSDRRQSRSKYGAKRPK. The span at 113-123 shows a compositional bias: basic residues; the sequence is SRSKYGAKRPK.

The protein belongs to the universal ribosomal protein uS12 family. As to quaternary structure, part of the 30S ribosomal subunit. Contacts proteins S8 and S17. May interact with IF1 in the 30S initiation complex.

In terms of biological role, with S4 and S5 plays an important role in translational accuracy. Interacts with and stabilizes bases of the 16S rRNA that are involved in tRNA selection in the A site and with the mRNA backbone. Located at the interface of the 30S and 50S subunits, it traverses the body of the 30S subunit contacting proteins on the other side and probably holding the rRNA structure together. The combined cluster of proteins S8, S12 and S17 appears to hold together the shoulder and platform of the 30S subunit. The sequence is that of Small ribosomal subunit protein uS12 from Solidesulfovibrio magneticus (strain ATCC 700980 / DSM 13731 / RS-1) (Desulfovibrio magneticus).